Here is a 68-residue protein sequence, read N- to C-terminus: Protein P33 (68 aa).

Positions 34–63 (IVNLQGRIAELEARETEMLARVDTLIARLA) form a coiled coil.

Its function is as follows. Assembly protein. This chain is Protein P33 (XXXIII), found in Acinetobacter calcoaceticus (Arthrobacter siderocapsulatus).